A 2382-amino-acid chain; its full sequence is Nonribosomal peptide synthetase chyA (2382 aa).

The tract at residues 204–607 is adenylation 1; sequence QKCATQPESI…LGRKDHQVKI (404 aa). One can recognise a Carrier 1 domain in the interval 745–821; the sequence is TPTTQNQRIL…DMASVLVKDH (77 aa). O-(pantetheine 4'-phosphoryl)serine is present on Ser-782. A condensation 1 region spans residues 857 to 1269; the sequence is EDVYPCTHMQ…LVPPEDMATL (413 aa). An adenylation 2 region spans residues 1294–1687; the sequence is GQPDTLAIHS…VGRKDDQVKL (394 aa). Residues 1833–1909 enclose the Carrier 2 domain; the sequence is VPVSIHGRKV…GLSLKCATEN (77 aa). Ser-1870 is subject to O-(pantetheine 4'-phosphoryl)serine. The segment at 1967–2373 is condensation 2; sequence MTLHNFYSRY…FSDVIESLAS (407 aa).

The protein belongs to the NRP synthetase family.

Its pathway is pigment biosynthesis. Its function is as follows. Nonribosomal peptide synthetase; part of the gene cluster that mediates the biosynthesis of the yellow pigment chrysogine. the NRPS chyA mediates the condensation of anthranilic acid and alanine into the intermediate 2-(2-aminopropanamido)benzoic acid. The remainder of the pathway is highly branched yielding at least 13 chrysogine-related compounds. The malonyl transferase chyE converts 2-(2-aminopropanamido)benzoic acid and 2-(2-aminopropanamido)benzamidine into 2-(2-(2-carboxyacetamido)propanamido)benzoic acid and 3-((1-((2-carbamoylphenyl)amino)-1-oxopropan-2-yl)amino)-3-oxopropanoic acid, respectively. ChyD is an amidase, being responsible for the amidation of the carboxylic acid moiety of 2-(2-aminopropanamido)benzoic acid, 2-(2-(2-carboxyacetamido)propanamido)benzoic acid and 2-(2-((4-amino-1-carboxy-4-oxobutyl)amino)propanamido)benzoic acid. ChyC is involved in the same reactions as ChyD, but plays a more minor role in the amidation reactions compared to chyD. The oxidoreductases chyH and chyM are involved in oxidation reactions that form N-pyruvoylanthranilamide from 2-(2-aminopropanamido)benzamidine and (1-((2-carbamoylphenyl)amino)-1-oxopropan-2-yl)glutamine, respectively. N-pyruvoylanthranilamide is further converted via two further branches in the pathway, yielding chrysogine and additional chrysogine-related coumpounds. Chrysogine is likely formed by a spontaneous ring closure from N-pyruvoylanthranilamide. This chain is Nonribosomal peptide synthetase chyA, found in Penicillium rubens (strain ATCC 28089 / DSM 1075 / NRRL 1951 / Wisconsin 54-1255) (Penicillium chrysogenum).